Reading from the N-terminus, the 427-residue chain is Gamma-glutamyl phosphate reductase (427 aa).

The protein belongs to the gamma-glutamyl phosphate reductase family.

It is found in the cytoplasm. The enzyme catalyses L-glutamate 5-semialdehyde + phosphate + NADP(+) = L-glutamyl 5-phosphate + NADPH + H(+). The protein operates within amino-acid biosynthesis; L-proline biosynthesis; L-glutamate 5-semialdehyde from L-glutamate: step 2/2. In terms of biological role, catalyzes the NADPH-dependent reduction of L-glutamate 5-phosphate into L-glutamate 5-semialdehyde and phosphate. The product spontaneously undergoes cyclization to form 1-pyrroline-5-carboxylate. This is Gamma-glutamyl phosphate reductase from Gluconobacter oxydans (strain 621H) (Gluconobacter suboxydans).